A 772-amino-acid polypeptide reads, in one-letter code: Mitochondrial intermediate peptidase (772 aa).

Residues 1-33 constitute a mitochondrion transit peptide; it reads MLARPSTTVLARRPFFRFRGCLNEPRPTKARCL. His556 is a Zn(2+) binding site. The active site involves Glu557. Residues His560 and His563 each contribute to the Zn(2+) site.

It belongs to the peptidase M3 family. The cofactor is Zn(2+).

The protein resides in the mitochondrion matrix. It catalyses the reaction Release of an N-terminal octapeptide as second stage of processing of some proteins imported into the mitochondrion.. Cleaves proteins, imported into the mitochondrion, to their mature size. While most mitochondrial precursor proteins are processed to the mature form in one step by mitochondrial processing peptidase (MPP), the sequential cleavage by MIP of an octapeptide after initial processing by MPP is a required step for a subgroup of nuclear-encoded precursor proteins destined for the matrix or the inner membrane. This Coprinopsis scobicola (Ink cap fungus) protein is Mitochondrial intermediate peptidase (OCT1).